The chain runs to 290 residues: Type II restriction enzyme MjaIII (290 aa).

This sequence belongs to the DpnII type II restriction endonuclease family.

It catalyses the reaction Endonucleolytic cleavage of DNA to give specific double-stranded fragments with terminal 5'-phosphates.. Functionally, a P subtype restriction enzyme that recognizes the double-stranded sequence 5'-GATC-3'; the cleavage site is unknown. This chain is Type II restriction enzyme MjaIII (mjaIIIR), found in Methanocaldococcus jannaschii (strain ATCC 43067 / DSM 2661 / JAL-1 / JCM 10045 / NBRC 100440) (Methanococcus jannaschii).